Reading from the N-terminus, the 262-residue chain is uncharacterized protein (262 aa).

The region spanning M1–E211 is the Radical SAM core domain. [4Fe-4S] cluster contacts are provided by C13, C17, and C20.

It belongs to the radical SAM superfamily. Anaerobic sulfatase-maturating enzyme family. The cofactor is [4Fe-4S] cluster.

This is an uncharacterized protein from Methanothermobacter thermautotrophicus (strain ATCC 29096 / DSM 1053 / JCM 10044 / NBRC 100330 / Delta H) (Methanobacterium thermoautotrophicum).